Reading from the N-terminus, the 258-residue chain is DNA repair protein RecO (258 aa).

This sequence belongs to the RecO family.

In terms of biological role, involved in DNA repair and RecF pathway recombination. In Desulfatibacillum aliphaticivorans, this protein is DNA repair protein RecO.